The sequence spans 358 residues: tRNA-specific 2-thiouridylase MnmA (358 aa).

ATP contacts are provided by residues 10-17 and Met36; that span reads AMSGGVDS. Cys105 acts as the Nucleophile in catalysis. An intrachain disulfide couples Cys105 to Cys202. ATP is bound at residue Gly129. The interval 152–154 is interaction with tRNA; sequence KDQ. Cys202 functions as the Cysteine persulfide intermediate in the catalytic mechanism. Positions 308–309 are interaction with tRNA; sequence RY.

It belongs to the MnmA/TRMU family.

Its subcellular location is the cytoplasm. It catalyses the reaction S-sulfanyl-L-cysteinyl-[protein] + uridine(34) in tRNA + AH2 + ATP = 2-thiouridine(34) in tRNA + L-cysteinyl-[protein] + A + AMP + diphosphate + H(+). Functionally, catalyzes the 2-thiolation of uridine at the wobble position (U34) of tRNA, leading to the formation of s(2)U34. This chain is tRNA-specific 2-thiouridylase MnmA, found in Magnetococcus marinus (strain ATCC BAA-1437 / JCM 17883 / MC-1).